We begin with the raw amino-acid sequence, 181 residues long: Large ribosomal subunit protein uL6 (181 aa).

Belongs to the universal ribosomal protein uL6 family. As to quaternary structure, part of the 50S ribosomal subunit.

This protein binds to the 23S rRNA, and is important in its secondary structure. It is located near the subunit interface in the base of the L7/L12 stalk, and near the tRNA binding site of the peptidyltransferase center. This chain is Large ribosomal subunit protein uL6, found in Desulforudis audaxviator (strain MP104C).